A 431-amino-acid polypeptide reads, in one-letter code: Fibrinogen C domain-containing protein 1 (431 aa).

Over 1–3 the chain is Cytoplasmic; that stretch reads MLC. The helical; Signal-anchor for type II membrane protein transmembrane segment at 4-24 threads the bilayer; the sequence is TVLLALAVLLAVAVTGAVLFL. Topologically, residues 25–431 are extracellular; that stretch reads NHTHTPGTAP…MKIRPVREDR (407 aa). The 224-residue stretch at 205 to 428 folds into the Fibrinogen C-terminal domain; that stretch reads CATGSRPRDC…FSEMKIRPVR (224 aa). The cysteines at positions 214 and 243 are disulfide-linked. Asn-310 is a glycosylation site (N-linked (GlcNAc...) asparagine). The Ca(2+) site is built by Asp-363 and Asp-365. Cys-371 and Cys-384 are oxidised to a cystine.

In terms of assembly, homotetramer; disulfide-linked.

It localises to the membrane. Functionally, acetyl group-binding receptor which shows a high-affinity and calcium-dependent binding to acetylated structures such as chitin, some N-acetylated carbohydrates, and amino acids, but not to their non-acetylated counterparts. Can facilitate the endocytosis of acetylated components. The sequence is that of Fibrinogen C domain-containing protein 1 (FIBCD1) from Macaca fascicularis (Crab-eating macaque).